Reading from the N-terminus, the 192-residue chain is UPF0301 protein Bcen_0382 (192 aa).

It belongs to the UPF0301 (AlgH) family.

This Burkholderia orbicola (strain AU 1054) protein is UPF0301 protein Bcen_0382.